Here is a 142-residue protein sequence, read N- to C-terminus: Regulator of ribonuclease activity B (142 aa).

The segment at 117–142 is disordered; that stretch reads PNADEDEYGEDGEFFDDEFADDDEKR.

This sequence belongs to the RraB family. In terms of assembly, interacts with the C-terminal region of Rne.

It is found in the cytoplasm. In terms of biological role, globally modulates RNA abundance by binding to RNase E (Rne) and regulating its endonucleolytic activity. Can modulate Rne action in a substrate-dependent manner by altering the composition of the degradosome. The sequence is that of Regulator of ribonuclease activity B from Actinobacillus succinogenes (strain ATCC 55618 / DSM 22257 / CCUG 43843 / 130Z).